Consider the following 381-residue polypeptide: MGPVGAEADENQTVEVKVEPYGPGHTTPRGELPPDPEPELIDSTKLVEVQVILILAYCSIILLGVVGNSLVIHVVIKFKSMRTVTNFFIANLAVADLLVNTLCLPFTLTYTLMGEWKMGPVLCHLVPYAQGLAVQVSTITLTVIALDRHRCIVYHLESKISKRISFLIIGLAWGISALLASPLAIFREYSLIEIIPDFEIVACTEKWPGEEKSVYGTVYSLSTLLILYVLPLGIISFSYTRIWSKLRNHVSPGAASDHYHQRRHKMTKMLVCVVVVFAVSWLPLHAFQLAVDIDSHVLDLKEYKLIFTVFHIIAMCSTFANPLLYGWMNSNYRKAFLSAFRCEQRLDAIHSEVSMTFKAKKNLEVKKNNGPTDSFSEATNV.

A disordered region spans residues 1-37 (MGPVGAEADENQTVEVKVEPYGPGHTTPRGELPPDPE). Residues 1-51 (MGPVGAEADENQTVEVKVEPYGPGHTTPRGELPPDPEPELIDSTKLVEVQV) are Extracellular-facing. Asparagine 11 carries N-linked (GlcNAc...) asparagine glycosylation. A helical transmembrane segment spans residues 52–72 (ILILAYCSIILLGVVGNSLVI). The Cytoplasmic segment spans residues 73–86 (HVVIKFKSMRTVTN). A helical membrane pass occupies residues 87 to 107 (FFIANLAVADLLVNTLCLPFT). At 108–124 (LTYTLMGEWKMGPVLCH) the chain is on the extracellular side. A disulfide bridge connects residues cysteine 123 and cysteine 203. The helical transmembrane segment at 125 to 145 (LVPYAQGLAVQVSTITLTVIA) threads the bilayer. The Cytoplasmic portion of the chain corresponds to 146-165 (LDRHRCIVYHLESKISKRIS). Residues 166–186 (FLIIGLAWGISALLASPLAIF) traverse the membrane as a helical segment. The Extracellular portion of the chain corresponds to 187–216 (REYSLIEIIPDFEIVACTEKWPGEEKSVYG). Residues 217–237 (TVYSLSTLLILYVLPLGIISF) traverse the membrane as a helical segment. Residues 238 to 268 (SYTRIWSKLRNHVSPGAASDHYHQRRHKMTK) lie on the Cytoplasmic side of the membrane. A helical membrane pass occupies residues 269-289 (MLVCVVVVFAVSWLPLHAFQL). Residues 290-304 (AVDIDSHVLDLKEYK) lie on the Extracellular side of the membrane. Residues 305 to 325 (LIFTVFHIIAMCSTFANPLLY) form a helical membrane-spanning segment. Residues 326–381 (GWMNSNYRKAFLSAFRCEQRLDAIHSEVSMTFKAKKNLEVKKNNGPTDSFSEATNV) are Cytoplasmic-facing. Cysteine 342 carries S-palmitoyl cysteine lipidation.

This sequence belongs to the G-protein coupled receptor 1 family.

Its subcellular location is the cell membrane. Functionally, receptor for neuropeptide Y and peptide YY. The protein is Neuropeptide Y receptor type 2 (Npy2r) of Mus musculus (Mouse).